The sequence spans 675 residues: Methionine--tRNA ligase (675 aa).

Positions 15-25 (PYANGSIHLGH) match the 'HIGH' region motif. Zn(2+) is bound by residues cysteine 146, cysteine 149, cysteine 159, and cysteine 162. The 'KMSKS' region motif lies at 332–336 (KMSKS). Lysine 335 serves as a coordination point for ATP. The 102-residue stretch at 574–675 (DFAKLDLRIA…AGAKPGMRVK (102 aa)) folds into the tRNA-binding domain.

The protein belongs to the class-I aminoacyl-tRNA synthetase family. MetG type 1 subfamily. In terms of assembly, homodimer. Requires Zn(2+) as cofactor.

It localises to the cytoplasm. It carries out the reaction tRNA(Met) + L-methionine + ATP = L-methionyl-tRNA(Met) + AMP + diphosphate. Its function is as follows. Is required not only for elongation of protein synthesis but also for the initiation of all mRNA translation through initiator tRNA(fMet) aminoacylation. The sequence is that of Methionine--tRNA ligase from Tolumonas auensis (strain DSM 9187 / NBRC 110442 / TA 4).